Consider the following 283-residue polypeptide: tRNA-cytidine(32) 2-sulfurtransferase (283 aa).

The PP-loop motif signature appears at 37–42 (SGGKDS). C112, C115, and C203 together coordinate [4Fe-4S] cluster.

It belongs to the TtcA family. Homodimer. Requires Mg(2+) as cofactor. [4Fe-4S] cluster serves as cofactor.

The protein localises to the cytoplasm. The enzyme catalyses cytidine(32) in tRNA + S-sulfanyl-L-cysteinyl-[cysteine desulfurase] + AH2 + ATP = 2-thiocytidine(32) in tRNA + L-cysteinyl-[cysteine desulfurase] + A + AMP + diphosphate + H(+). The protein operates within tRNA modification. Functionally, catalyzes the ATP-dependent 2-thiolation of cytidine in position 32 of tRNA, to form 2-thiocytidine (s(2)C32). The sulfur atoms are provided by the cysteine/cysteine desulfurase (IscS) system. This chain is tRNA-cytidine(32) 2-sulfurtransferase, found in Legionella pneumophila subsp. pneumophila (strain Philadelphia 1 / ATCC 33152 / DSM 7513).